Here is a 128-residue protein sequence, read N- to C-terminus: Large ribosomal subunit protein bL12 (128 aa).

Belongs to the bacterial ribosomal protein bL12 family. As to quaternary structure, homodimer. Part of the ribosomal stalk of the 50S ribosomal subunit. Forms a multimeric L10(L12)X complex, where L10 forms an elongated spine to which 2 to 4 L12 dimers bind in a sequential fashion. Binds GTP-bound translation factors.

Forms part of the ribosomal stalk which helps the ribosome interact with GTP-bound translation factors. Is thus essential for accurate translation. The sequence is that of Large ribosomal subunit protein bL12 from Sulfurihydrogenibium sp. (strain YO3AOP1).